The chain runs to 83 residues: Small ribosomal subunit protein bS16 (83 aa).

Belongs to the bacterial ribosomal protein bS16 family.

This Azotobacter vinelandii (strain DJ / ATCC BAA-1303) protein is Small ribosomal subunit protein bS16.